Consider the following 20-residue polypeptide: Cytochrome c oxidase subunit 8B, mitochondrial (20 aa).

It belongs to the cytochrome c oxidase VIII family. Component of the cytochrome c oxidase (complex IV, CIV), a multisubunit enzyme composed of 14 subunits. The complex is composed of a catalytic core of 3 subunits MT-CO1, MT-CO2 and MT-CO3, encoded in the mitochondrial DNA, and 11 supernumerary subunits COX4I, COX5A, COX5B, COX6A, COX6B, COX6C, COX7A, COX7B, COX7C, COX8 and NDUFA4, which are encoded in the nuclear genome. The complex exists as a monomer or a dimer and forms supercomplexes (SCs) in the inner mitochondrial membrane with NADH-ubiquinone oxidoreductase (complex I, CI) and ubiquinol-cytochrome c oxidoreductase (cytochrome b-c1 complex, complex III, CIII), resulting in different assemblies (supercomplex SCI(1)III(2)IV(1) and megacomplex MCI(2)III(2)IV(2)).

It is found in the mitochondrion inner membrane. The protein operates within energy metabolism; oxidative phosphorylation. Component of the cytochrome c oxidase, the last enzyme in the mitochondrial electron transport chain which drives oxidative phosphorylation. The respiratory chain contains 3 multisubunit complexes succinate dehydrogenase (complex II, CII), ubiquinol-cytochrome c oxidoreductase (cytochrome b-c1 complex, complex III, CIII) and cytochrome c oxidase (complex IV, CIV), that cooperate to transfer electrons derived from NADH and succinate to molecular oxygen, creating an electrochemical gradient over the inner membrane that drives transmembrane transport and the ATP synthase. Cytochrome c oxidase is the component of the respiratory chain that catalyzes the reduction of oxygen to water. Electrons originating from reduced cytochrome c in the intermembrane space (IMS) are transferred via the dinuclear copper A center (CU(A)) of subunit 2 and heme A of subunit 1 to the active site in subunit 1, a binuclear center (BNC) formed by heme A3 and copper B (CU(B)). The BNC reduces molecular oxygen to 2 water molecules using 4 electrons from cytochrome c in the IMS and 4 protons from the mitochondrial matrix. The sequence is that of Cytochrome c oxidase subunit 8B, mitochondrial from Thunnus obesus (Bigeye tuna).